The following is a 74-amino-acid chain: Neuropeptide-like protein 33 (74 aa).

The first 21 residues, 1 to 21, serve as a signal peptide directing secretion; the sequence is MISTSLLLVVLLFAILAIVDA. Tyrosine amide is present on Tyr72.

This sequence belongs to the YARP (YGGW-amide related peptide) family. As to expression, expressed in hypoderm.

It is found in the secreted. In terms of biological role, may have antifungic activity against D.coniospora. This is Neuropeptide-like protein 33 (nlp-33) from Caenorhabditis elegans.